The sequence spans 509 residues: tRNA (guanine(37)-N(1))-methyltransferase (509 aa).

The N-terminal 57 residues, Met1–Phe57, are a transit peptide targeting the mitochondrion. Residues His289, Asp327 to Leu328, Asp355 to Gly356, and Asn387 contribute to the S-adenosyl-L-methionine site. A disordered region spans residues Thr478 to Thr509.

It belongs to the class I-like SAM-binding methyltransferase superfamily. TRM5/TYW2 family. In terms of assembly, monomer.

The protein localises to the mitochondrion matrix. It is found in the nucleus. It localises to the cytoplasm. It catalyses the reaction guanosine(37) in tRNA + S-adenosyl-L-methionine = N(1)-methylguanosine(37) in tRNA + S-adenosyl-L-homocysteine + H(+). Functionally, involved in mitochondrial tRNA methylation. Specifically methylates the N1 position of guanosine-37 in various tRNAs. Methylation is not dependent on the nature of the nucleoside 5' of the target nucleoside. This is the first step in the biosynthesis of wybutosine (yW), a modified base adjacent to the anticodon of tRNAs and required for accurate decoding. This Macaca fascicularis (Crab-eating macaque) protein is tRNA (guanine(37)-N(1))-methyltransferase.